The primary structure comprises 66 residues: Neurotoxin BmK AGP-SYPU1 (66 aa).

The LCN-type CS-alpha/beta domain occupies 2 to 64 (RDAYIAQNYN…KPIRIPGKCH (63 aa)). Intrachain disulfides connect Cys12–Cys63, Cys16–Cys36, Cys22–Cys46, and Cys26–Cys48. Residues 65 to 66 (RR) constitute a propeptide, removed by a carboxypeptidase.

Expressed by the venom gland.

The protein localises to the secreted. Functionally, alpha toxins bind voltage-independently at site-3 of sodium channels (Nav) and inhibit the inactivation of the activated channels, thereby blocking neuronal transmission. This toxin has a strong analgesic effect when administered to mice by intraperitoneal injection. This chain is Neurotoxin BmK AGP-SYPU1, found in Olivierus martensii (Manchurian scorpion).